The chain runs to 82 residues: Small ribosomal subunit protein bS18 (82 aa).

Residues methionine 1–alanine 24 form a disordered region.

The protein belongs to the bacterial ribosomal protein bS18 family. In terms of assembly, part of the 30S ribosomal subunit. Forms a tight heterodimer with protein bS6.

In terms of biological role, binds as a heterodimer with protein bS6 to the central domain of the 16S rRNA, where it helps stabilize the platform of the 30S subunit. In Corynebacterium jeikeium (strain K411), this protein is Small ribosomal subunit protein bS18.